Consider the following 691-residue polypeptide: L-type lectin-domain containing receptor kinase S.6 (691 aa).

The N-terminal stretch at 1 to 25 (MNHHHYSLVIFHLILFLSLDFPTLS) is a signal peptide. The Extracellular portion of the chain corresponds to 26-311 (HRFSPPLQNL…VVGLKIPVWS (286 aa)). The tract at residues 27 to 257 (RFSPPLQNLT…LHIVERWKFR (231 aa)) is legume-lectin like. Asn34 and Asn89 each carry an N-linked (GlcNAc...) asparagine glycan. Residues 312 to 332 (LLPGLAAIVILVAFIVFSLIC) traverse the membrane as a helical segment. The Cytoplasmic portion of the chain corresponds to 333 to 691 (GKKRISEEAD…PWMTPKSHFS (359 aa)). The Protein kinase domain maps to 366 to 653 (FNENAIVGQG…IRGEAPLPVL (288 aa)). ATP contacts are provided by residues 372-380 (VGQGASATV) and Lys394. Catalysis depends on Asp500, which acts as the Proton acceptor.

It in the C-terminal section; belongs to the protein kinase superfamily. Ser/Thr protein kinase family. The protein in the N-terminal section; belongs to the leguminous lectin family.

It is found in the cell membrane. It catalyses the reaction L-seryl-[protein] + ATP = O-phospho-L-seryl-[protein] + ADP + H(+). The catalysed reaction is L-threonyl-[protein] + ATP = O-phospho-L-threonyl-[protein] + ADP + H(+). Involved in resistance response to the pathogenic oomycetes Phytophthora infestans and Phytophthora capsici and to the pathogenic bacteria Pseudomonas syringae. This Arabidopsis thaliana (Mouse-ear cress) protein is L-type lectin-domain containing receptor kinase S.6.